The chain runs to 230 residues: Probable C4-dicarboxylate response regulator DctR (230 aa).

One can recognise a Response regulatory domain in the interval 8 to 124; that stretch reads RVLLIEDDPM…RLKAALTQYE (117 aa). The residue at position 59 (D59) is a 4-aspartylphosphate. A DNA-binding region (H-T-H motif) is located at residues 183–209; sequence EEIGRDVGLARVTVRRYLNYLESVGQV.

In terms of processing, phosphorylated by DctS.

The protein resides in the cytoplasm. In terms of biological role, member of the two-component regulatory system DctS/DctR. Essential for expression of DctP. The sequence is that of Probable C4-dicarboxylate response regulator DctR (dctR) from Halalkalibacterium halodurans (strain ATCC BAA-125 / DSM 18197 / FERM 7344 / JCM 9153 / C-125) (Bacillus halodurans).